A 289-amino-acid chain; its full sequence is Pantothenate synthetase (289 aa).

30–37 (MGYLHKGH) provides a ligand contact to ATP. His37 functions as the Proton donor in the catalytic mechanism. Residue Gln61 participates in (R)-pantoate binding. Gln61 provides a ligand contact to beta-alanine. Residue 147–150 (GEKD) participates in ATP binding. Gln153 serves as a coordination point for (R)-pantoate. ATP is bound by residues Val176 and 184 to 187 (CSSR).

This sequence belongs to the pantothenate synthetase family. In terms of assembly, homodimer.

Its subcellular location is the cytoplasm. The catalysed reaction is (R)-pantoate + beta-alanine + ATP = (R)-pantothenate + AMP + diphosphate + H(+). Its pathway is cofactor biosynthesis; (R)-pantothenate biosynthesis; (R)-pantothenate from (R)-pantoate and beta-alanine: step 1/1. Functionally, catalyzes the condensation of pantoate with beta-alanine in an ATP-dependent reaction via a pantoyl-adenylate intermediate. This chain is Pantothenate synthetase, found in Brucella anthropi (strain ATCC 49188 / DSM 6882 / CCUG 24695 / JCM 21032 / LMG 3331 / NBRC 15819 / NCTC 12168 / Alc 37) (Ochrobactrum anthropi).